The following is a 622-amino-acid chain: 4-hydroxyphenylalkanoate adenylyltransferase (622 aa).

The protein belongs to the ATP-dependent AMP-binding enzyme family.

The catalysed reaction is 17-(4-hydroxyphenyl)heptadecanoate + holo-[(phenol)carboxyphthiodiolenone synthase] + ATP = 17-(4-hydroxyphenyl)heptadecanoyl-[(phenol)carboxyphthiodiolenone synthase] + AMP + diphosphate. It catalyses the reaction 19-(4-hydroxyphenyl)nonadecanoate + holo-[(phenol)carboxyphthiodiolenone synthase] + ATP = 19-(4-hydroxyphenyl)nonadecanoyl-[(phenol)carboxyphthiodiolenone synthase] + AMP + diphosphate. It functions in the pathway lipid metabolism; fatty acid biosynthesis. Catalyzes the activation of long-chain fatty acids as acyl-adenylates (acyl-AMP), which are then transferred to the multifunctional polyketide synthase PpsA for further chain extension. Involved in the biosynthesis of phenolphthiocerol, which is an important intermediate in the biosynthesis of phenolic glycolipid (PGL), also called mycosid B. The protein is 4-hydroxyphenylalkanoate adenylyltransferase (fadD29) of Mycobacterium marinum (strain ATCC BAA-535 / M).